The sequence spans 334 residues: NADH dehydrogenase (ubiquinone) complex I, assembly factor 6 homolog (334 aa).

The N-terminal 11 residues, 1–11, are a transit peptide targeting the mitochondrion; that stretch reads MRRLVRNWNCR.

The protein belongs to the NDUFAF6 family. Associates with mitochondrial complex I assembly intermediates during its biogenesis. Forms a complex including sicily, ND-42 and Hsp83; the complex is necessary to chaperone ND-42 in the cytoplasm before mitochondrial import; the interaction between sicily and ND-42 is direct and occurs preferably between the unprocessed forms in the cytoplasm; the interaction with Hsp83 is direct. Interacts with ND-30; interaction is stronger between the unprocessed forms in the cytoplasm. Expressed in the ventral nerve cord, larval brain, motor neuron axons, imaginal disks, and muscles (at protein level).

The protein resides in the mitochondrion inner membrane. It localises to the cytoplasm. It is found in the cytosol. Functionally, involved in the assembly of mitochondrial NADH:ubiquinone oxidoreductase complex (Complex I) at early stages. Interacts with cytosolic Hsp90 to chaperone the Complex I subunit ND-42 in the cytoplasm. This is NADH dehydrogenase (ubiquinone) complex I, assembly factor 6 homolog from Drosophila melanogaster (Fruit fly).